A 361-amino-acid polypeptide reads, in one-letter code: 1-deoxy-D-xylulose 5-phosphate reductoisomerase (361 aa).

Residues Thr12, Gly13, Ser14, Ile15, Gly38, and Asn102 each coordinate NADPH. Lys103 serves as a coordination point for 1-deoxy-D-xylulose 5-phosphate. Glu104 is an NADPH binding site. Asp126 lines the Mn(2+) pocket. 1-deoxy-D-xylulose 5-phosphate is bound by residues Ser127, Glu128, Ser152, and His175. Glu128 contacts Mn(2+). Gly181 provides a ligand contact to NADPH. Ser188, Asn193, Lys194, and Glu197 together coordinate 1-deoxy-D-xylulose 5-phosphate. Glu197 contributes to the Mn(2+) binding site.

Belongs to the DXR family. It depends on Mg(2+) as a cofactor. Mn(2+) serves as cofactor.

The enzyme catalyses 2-C-methyl-D-erythritol 4-phosphate + NADP(+) = 1-deoxy-D-xylulose 5-phosphate + NADPH + H(+). It functions in the pathway isoprenoid biosynthesis; isopentenyl diphosphate biosynthesis via DXP pathway; isopentenyl diphosphate from 1-deoxy-D-xylulose 5-phosphate: step 1/6. Catalyzes the NADPH-dependent rearrangement and reduction of 1-deoxy-D-xylulose-5-phosphate (DXP) to 2-C-methyl-D-erythritol 4-phosphate (MEP). The polypeptide is 1-deoxy-D-xylulose 5-phosphate reductoisomerase (Leifsonia xyli subsp. xyli (strain CTCB07)).